The chain runs to 328 residues: Arylacetonitrilase (328 aa).

Residues 5-278 (VRVAVTQAEP…EGIIYADLDL (274 aa)) form the CN hydrolase domain. E45 (proton acceptor) is an active-site residue. The active site involves K125. Residue C160 is the Nucleophile of the active site.

The protein belongs to the carbon-nitrogen hydrolase superfamily. Nitrilase family.

The catalysed reaction is a nitrile + 2 H2O = a carboxylate + NH4(+). It carries out the reaction 4-chlorophenylacetonitrile + 2 H2O = 4-chlorophenylacetate + NH4(+). In terms of biological role, nitrilase that hydrolyzes preferentially phenylacetonitrile and (R,S)-mandelonitrile. Also acts on dinitriles like phenylenediacetonitriles (PDAs) 1,2-PDA, 1,3-PDA, and 1,4-PDA, and cyanophenyl acetonitriles (CPAs) 2-CPA and 4-CPA. The protein is Arylacetonitrilase (nit2) of Aspergillus kawachii (strain NBRC 4308) (White koji mold).